A 311-amino-acid polypeptide reads, in one-letter code: Trem-like transcript 1 protein (311 aa).

An N-terminal signal peptide occupies residues 1-15; the sequence is MGLTLLLLLLLGLEG. Residues 16–121 enclose the Ig-like V-type domain; that stretch reads QGIVGSLPEV…PQILHRVSLN (106 aa). Topologically, residues 16-162 are extracellular; it reads QGIVGSLPEV…EPSQDEKSIP (147 aa). 2 disulfides stabilise this stretch: C38/C104 and C52/C59. A helical transmembrane segment spans residues 163-183; that stretch reads LIWGAVLLVGLLVAAVVLFAV. Residues 184–311 are Cytoplasmic-facing; the sequence is MAKRKQGNRL…NPPNNQTPSS (128 aa). Residue C196 is the site of S-palmitoyl cysteine attachment. Positions 229-263 are disordered; it reads VPHIRLDSPPSFDNTTYTSLPLDSPSGKPSLPAPS. Residues 239–249 show a composition bias toward polar residues; the sequence is SFDNTTYTSLP. An ITIM motif is present at residues 279-284; it reads VTYATV. A disordered region spans residues 287–311; the sequence is PGGNKGGGTSCGPAQNPPNNQTPSS.

As to quaternary structure, when phosphorylated, interacts with PTPN6. When phosphorylated, interacts with PTPN11. Phosphorylated on tyrosine residues. Detected in platelets, monocytic leukemia and in T-cell leukemia.

It is found in the cell membrane. The protein resides in the cytoplasm. In terms of biological role, cell surface receptor that may play a role in the innate and adaptive immune response. The polypeptide is Trem-like transcript 1 protein (TREML1) (Homo sapiens (Human)).